We begin with the raw amino-acid sequence, 204 residues long: Phosphatidylserine decarboxylase proenzyme (204 aa).

Ser169 (schiff-base intermediate with substrate; via pyruvic acid) is an active-site residue. At Ser169 the chain carries Pyruvic acid (Ser); by autocatalysis.

Belongs to the phosphatidylserine decarboxylase family. PSD-A subfamily. As to quaternary structure, heterodimer of a large membrane-associated beta subunit and a small pyruvoyl-containing alpha subunit. It depends on pyruvate as a cofactor. Is synthesized initially as an inactive proenzyme. Formation of the active enzyme involves a self-maturation process in which the active site pyruvoyl group is generated from an internal serine residue via an autocatalytic post-translational modification. Two non-identical subunits are generated from the proenzyme in this reaction, and the pyruvate is formed at the N-terminus of the alpha chain, which is derived from the carboxyl end of the proenzyme. The post-translation cleavage follows an unusual pathway, termed non-hydrolytic serinolysis, in which the side chain hydroxyl group of the serine supplies its oxygen atom to form the C-terminus of the beta chain, while the remainder of the serine residue undergoes an oxidative deamination to produce ammonia and the pyruvoyl prosthetic group on the alpha chain.

Its subcellular location is the cell membrane. The enzyme catalyses a 1,2-diacyl-sn-glycero-3-phospho-L-serine + H(+) = a 1,2-diacyl-sn-glycero-3-phosphoethanolamine + CO2. Its pathway is phospholipid metabolism; phosphatidylethanolamine biosynthesis; phosphatidylethanolamine from CDP-diacylglycerol: step 2/2. Its function is as follows. Catalyzes the formation of phosphatidylethanolamine (PtdEtn) from phosphatidylserine (PtdSer). This chain is Phosphatidylserine decarboxylase proenzyme, found in Solibacter usitatus (strain Ellin6076).